The chain runs to 93 residues: U12-lycotoxin-Ls1a (93 aa).

The signal sequence occupies residues 1-18; the sequence is MKFAVILLFSLVVLTVAS. Residues 19–38 constitute a propeptide that is removed on maturation; it reads ESVEEVRREIDIEDLPEQQR.

This sequence belongs to the neurotoxin 31 family. Contains 5 disulfide bonds. In terms of tissue distribution, expressed by the venom gland.

The protein localises to the secreted. In Lycosa singoriensis (Wolf spider), this protein is U12-lycotoxin-Ls1a.